The sequence spans 185 residues: Large ribosomal subunit protein uL15 (185 aa).

Residues 1 to 51 (MDLSSLRPAAGAVKNKKRVGRGQGSGNGTTAGKGNKGQQARSGYQKPINEG) form a disordered region. A compositionally biased stretch (gly residues) spans 21-35 (RGQGSGNGTTAGKGN).

It belongs to the universal ribosomal protein uL15 family. In terms of assembly, part of the 50S ribosomal subunit.

Its function is as follows. Binds to the 23S rRNA. The protein is Large ribosomal subunit protein uL15 of Chlorobium phaeobacteroides (strain DSM 266 / SMG 266 / 2430).